Reading from the N-terminus, the 1783-residue chain is Collagen alpha-1(XXVII) chain A (1783 aa).

The first 35 residues, 1 to 35, serve as a signal peptide directing secretion; sequence MNLATRRRVRRTSRLVAKRALLLCILLYCTSFGFT. Residues 73-235 form the Laminin G-like domain; it reads TTRARVTTPT…NICSAIRRQC (163 aa). 5 disordered regions span residues 288–312, 327–524, 553–744, 772–1461, and 1512–1546; these read SSSV…LALM, HKPS…PRTP, VGAP…APGP, PGNM…GDIG, and GNPG…LPGP. A compositionally biased stretch (low complexity) spans 403–415; sequence KPTSVPKPNPTKN. Pro residues predominate over residues 436-447; it reads LPAPKPTVPKRP. Polar residues predominate over residues 462–494; the sequence is HTTPLTPKSTLAPNSTSKKPLPTLKSTSFTTAA. The segment at 553–1547 is triple-helical region; sequence VGAPGLKGDQ…RGPPGLPGPP (995 aa). Positions 554–608 constitute a Collagen-like 1 domain; the sequence is GAPGLKGDQGESGLPGPPGKPGQPGMRGPRGPPGPHGKPGRPGPTGLKGKKGDPG. Low complexity-rich tracts occupy residues 622–633, 651–661, 735–744, 817–829, and 861–870; these read VGLPGPVGLVGV, EPGEQGPVGEA, EPGVIGAPGP, PGPQ…IGPS, and ARGLPGPRGA. Collagen-like domains lie at 818-873 and 845-902; these read GPQG…AAGR and GKPG…GALG. Residues 926–935 show a composition bias toward gly residues; that stretch reads GFIGPGGEAG. The segment covering 967 to 976 has biased composition (pro residues); that stretch reads GGPPGPPGSP. Low complexity-rich tracts occupy residues 978–988 and 1098–1129; these read SPGSRGPIGIR and SIGL…AGPD. The 58-residue stretch at 986–1043 folds into the Collagen-like 4 domain; that stretch reads GIRGPKGRRGPRGPDGVPGEIGTEGKKGPDGPPGKIGFPGHAGKIGESGEVGPKGFPG. Basic and acidic residues-rich tracts occupy residues 1131 to 1158, 1170 to 1182, and 1257 to 1267; these read TKGE…KDGP, PEGK…ERGK, and AKGEQGDDGKV. The Collagen-like 5 domain maps to 1269–1326; sequence GPTGAPGLRGPVGKRGDRGEPGDPGYVGQQGVDGLRGKPGAPGLPGDPGPRGTQGPKG. Low complexity-rich tracts occupy residues 1334–1349 and 1396–1409; these read KGKQ…RGSP and LPGK…VGVI. Collagen-like domains are found at residues 1446 to 1503 and 1497 to 1549; these read GPQG…GLAG and GRGG…PPGI. Over residues 1537–1546 the composition is skewed to pro residues; the sequence is PRGPPGLPGP. The propeptide at 1551 to 1783 is C-terminal propeptide; it reads LAMNQDFGLG…HLEVGPVCFL (233 aa). A Fibrillar collagen NC1 domain is found at 1589-1783; the sequence is PEILRTLDYL…HLEVGPVCFL (195 aa). 3 disulfide bridges follow: C1619-C1651, C1660-C1781, and C1696-C1734. Residues D1637, N1639, C1642, and D1645 each contribute to the Ca(2+) site. Residue N1698 is glycosylated (N-linked (GlcNAc...) asparagine).

Belongs to the fibrillar collagen family. As to expression, expressed dynamically in the notochord from late epiboly, spreading to the anterior notochord by 24 hpf, and then throughout the notochord by 30 hpf. Subsequently, notochordal expression becomes restricted to the distal tip of the tail by 48 hpf and is no longer detectable by 72 hpf. Also expressed throughout the floor plate and hypochord at 24 hpf, and in forming head cartilages and the first forming tooth.

Its subcellular location is the secreted. It is found in the extracellular space. The protein resides in the extracellular matrix. Its function is as follows. May play a role during the calcification of cartilage and the transition of cartilage to bone. Together with col27a1b, plays a role in development of the notochord and axial skeleton. This Danio rerio (Zebrafish) protein is Collagen alpha-1(XXVII) chain A.